We begin with the raw amino-acid sequence, 329 residues long: MASQLTDAFARKFYYLRLSITDVCNFRCTYCLPDGYKPGGVTNNGFLTVDEIRRVTRAFASLGTEKVRLTGGEPSLRRDFTDIIAAVGENDAIRQIAVTTNGYRLARDAANWREAGLTGVNVSVDSLDARQFHAITGQDKFRQVMAGIDAAFDAGFEKVKVNTVLMRDVNHHQLDTFLAWIQPRPIQLRFIELMETGEGSDLFRKHHISGQVLRDELIKRGWIHQLRQRSDGPAQVFCHPDYAGEIGLIMPYEKDFCATCNRLRVSSVGKLHLCLFGDGGVSLRDLLQDDAQQYALEKRISDALREKKQTHFLHQSNTGITQNLSYIGG.

Positions 8–234 constitute a Radical SAM core domain; the sequence is AFARKFYYLR…QLRQRSDGPA (227 aa). Arg17 is a GTP binding site. Residues Cys24 and Cys28 each contribute to the [4Fe-4S] cluster site. Tyr30 provides a ligand contact to S-adenosyl-L-methionine. Cys31 lines the [4Fe-4S] cluster pocket. Residue Arg68 participates in GTP binding. Residue Gly72 participates in S-adenosyl-L-methionine binding. Thr99 is a GTP binding site. Position 123 (Ser123) interacts with S-adenosyl-L-methionine. Lys160 is a binding site for GTP. Met194 provides a ligand contact to S-adenosyl-L-methionine. [4Fe-4S] cluster-binding residues include Cys257 and Cys260. GTP is bound at residue 262–264; it reads RLR. Cys274 contacts [4Fe-4S] cluster.

It belongs to the radical SAM superfamily. MoaA family. Monomer and homodimer. Requires [4Fe-4S] cluster as cofactor.

It catalyses the reaction GTP + AH2 + S-adenosyl-L-methionine = (8S)-3',8-cyclo-7,8-dihydroguanosine 5'-triphosphate + 5'-deoxyadenosine + L-methionine + A + H(+). Its pathway is cofactor biosynthesis; molybdopterin biosynthesis. Catalyzes the cyclization of GTP to (8S)-3',8-cyclo-7,8-dihydroguanosine 5'-triphosphate. In Salmonella dublin (strain CT_02021853), this protein is GTP 3',8-cyclase.